Consider the following 32-residue polypeptide: Photosystem II reaction center protein Psb30 (32 aa).

A helical membrane pass occupies residues 3–23 (IVIVQLGSLALITLAGPIIIV).

This sequence belongs to the Psb30/Ycf12 family. In terms of assembly, PSII is composed of 1 copy each of membrane proteins PsbA, PsbB, PsbC, PsbD, PsbE, PsbF, PsbH, PsbI, PsbJ, PsbK, PsbL, PsbM, PsbT, PsbY, PsbZ, Psb30/Ycf12, peripheral proteins of the oxygen-evolving complex and a large number of cofactors. It forms dimeric complexes.

Its subcellular location is the plastid. The protein resides in the chloroplast thylakoid membrane. A core subunit of photosystem II (PSII), probably helps stabilize the reaction center. This is Photosystem II reaction center protein Psb30 from Euglena viridis (Cercaria viridis).